The following is a 70-amino-acid chain: Large ribosomal subunit protein eL24 (70 aa).

Residues cysteine 7, cysteine 10, cysteine 33, and cysteine 37 each coordinate Zn(2+). Residues cysteine 7–cysteine 37 form a C4-type zinc finger.

It belongs to the eukaryotic ribosomal protein eL24 family. In terms of assembly, part of the 50S ribosomal subunit. Forms a cluster with proteins L3 and L14. The cofactor is Zn(2+).

Functionally, binds to the 23S rRNA. The sequence is that of Large ribosomal subunit protein eL24 from Methanocaldococcus jannaschii (strain ATCC 43067 / DSM 2661 / JAL-1 / JCM 10045 / NBRC 100440) (Methanococcus jannaschii).